Here is a 943-residue protein sequence, read N- to C-terminus: MGLTKQYLRYVASAVFGVIGSQKGNIVFVTLRGEKGRYVAVPACEHVFIWDLRKGEKILILQGLKQEVTCLCPSPDGLHLAVGYEDGSIRIFSLLSGEGNVTFNGHKAAITTLKYDQLGGRLASGSKDTDIIVWDVINESGLYRLKGHKDAITQALFLREKNLLVTSGKDTMVKWWDLDTQHCFKTMVGHRTEVWGLVLLSEEKRLITGASDSELRVWDIAYLQEIEDPEEPDPKKIKGSSPGIQDTLEAEDGAFETDEAPEDRILSCRKAGSIMREGRDRVVNLAVDKTGRILACHGTDSVLELFCILSKKEIQKKMDKKMKKARKKAKLHSSKGEEEDPEVNVEMSLQDEIQRVTNIKTSAKIKSFDLIHSPHGELKAVFLLQNNLVELYSLNPSLPTPQPVRTSRITIGGHRSDVRTLSFSSDNIAVLSAAADSIKIWNRSTLQCIRTMTCEYALCSFFVPGDRQVVIGTKTGKLQLYDLASGNLLETIDAHDGALWSMSLSPDQRGFVTGGADKSVKFWDFELVKDENSTQKRLSVKQTRTLQLDEDVLCVSYSPNQKLLAVSLLDCTVKIFYVDTLKFFLSLYGHKLPVICMDISHDGALIATGSADRNVKIWGLDFGDCHKSLFAHDDSVMYLQFVPKSHLFFTAGKDHKIKQWDADKFEHIQTLEGHHQEIWCLAVSPSGDYVVSSSHDKSLRLWERTREPLILEEEREMEREAEYEESVAKEDQPAVPGETQGDSYFTGKKTIETVKAAERIMEAIELYREETAKMKEHKAICKAAGKEVPLPSNPILMAYGSISPSAYVLEIFKGIKSSELEESLLVLPFSYVPDILKLFNEFIQLGSDVELICRCLFFLLRIHFGQITSNQMLVPVIEKLRETTISKVSQVRDVIGFNMAGLDYLKRECEAKSEVMFFADATSHLEEKKRKRKKREKLILTLT.

WD repeat units lie at residues 21–60, 63–102, 105–144, 147–186, and 189–228; these read SQKG…KILI, GLKQ…GNVT, GHKA…GLYR, GHKD…CFKT, and GHRT…EIED. Serine 240 and serine 241 each carry phosphoserine. Position 257 is a phosphothreonine (threonine 257). One copy of the WD 6 repeat lies at 277-316; the sequence is EGRDRVVNLAVDKTGRILACHGTDSVLELFCILSKKEIQK. The tract at residues 326–345 is disordered; it reads RKKAKLHSSKGEEEDPEVNV. WD repeat units follow at residues 413–451, 453–493, 494–533, 547–586, 589–630, 631–670, and 673–712; these read GHRS…CIRT, TCEY…ETID, AHDG…DENS, QLDE…FFLS, GHKL…KSLF, AHDD…HIQT, and GHHQ…LILE. Glycyl lysine isopeptide (Lys-Gly) (interchain with G-Cter in SUMO2) cross-links involve residues lysine 474 and lysine 529. Serine 726 is subject to Phosphoserine.

This sequence belongs to the WD repeat WDR3/UTP12 family. As to quaternary structure, part of the small subunit (SSU) processome, composed of more than 70 proteins and the RNA chaperone small nucleolar RNA (snoRNA) U3. In terms of tissue distribution, ubiquitous.

The protein localises to the nucleus. Its subcellular location is the nucleolus. In terms of biological role, part of the small subunit (SSU) processome, first precursor of the small eukaryotic ribosomal subunit. During the assembly of the SSU processome in the nucleolus, many ribosome biogenesis factors, an RNA chaperone and ribosomal proteins associate with the nascent pre-rRNA and work in concert to generate RNA folding, modifications, rearrangements and cleavage as well as targeted degradation of pre-ribosomal RNA by the RNA exosome. The chain is WD repeat-containing protein 3 from Homo sapiens (Human).